A 321-amino-acid polypeptide reads, in one-letter code: LIMR family protein SELMODRAFT_432210 (321 aa).

The next 5 membrane-spanning stretches (helical) occupy residues 28-48 (KQLWWVVYIIDTVLVYLVIPF), 116-133 (CFSLSSNVTLMLIRLDLW), 139-159 (LCVFPTYVIALSILFTMFGGV), 240-260 (LVFGILGLALSIIWLLHILVF), and 284-304 (LLGTTPFAIFCYYFVMSVISG).

Belongs to the LIMR family.

Its subcellular location is the membrane. The chain is LIMR family protein SELMODRAFT_432210 from Selaginella moellendorffii (Spikemoss).